Consider the following 152-residue polypeptide: MVRTTASFGTSSSFVLRLGQTLFSSASLLFMCFNDDEDFYAYTTFCYLVTVMGLVTPWSVTLALMEAYSILVKKLPMQATVISVIVAGDFVLSFLSLGGACSTASVAVLLMDAGEKQCDRYKLSATMAFLSSFLSFASTFFNFCLLPSLMSH.

The Cytoplasmic portion of the chain corresponds to 1-12 (MVRTTASFGTSS). Residues 13 to 33 (SFVLRLGQTLFSSASLLFMCF) traverse the membrane as a helical segment. Topologically, residues 34–44 (NDDEDFYAYTT) are extracellular. A helical membrane pass occupies residues 45–65 (FCYLVTVMGLVTPWSVTLALM). Residues 66–80 (EAYSILVKKLPMQAT) lie on the Cytoplasmic side of the membrane. Residues 81-101 (VISVIVAGDFVLSFLSLGGAC) traverse the membrane as a helical segment. At 102-126 (STASVAVLLMDAGEKQCDRYKLSAT) the chain is on the extracellular side. A helical membrane pass occupies residues 127–147 (MAFLSSFLSFASTFFNFCLLP). Residues 148 to 152 (SLMSH) are Cytoplasmic-facing.

The protein belongs to the Casparian strip membrane proteins (CASP) family. Homodimer and heterodimers.

It localises to the cell membrane. The sequence is that of CASP-like protein 5C1 from Arabidopsis thaliana (Mouse-ear cress).